Here is a 215-residue protein sequence, read N- to C-terminus: uncharacterized protein (215 aa).

S-adenosyl-L-methionine-binding residues include Gly-53, Glu-74, and Asp-97.

Belongs to the methyltransferase superfamily. YrrT family.

Functionally, could be a S-adenosyl-L-methionine-dependent methyltransferase. This is an uncharacterized protein from Geobacillus kaustophilus (strain HTA426).